Consider the following 219-residue polypeptide: MGRRPGRCYRYLSKKAYPKSRFNRGVPDSKIQIFDLGRRKAGVLEFPLLVNCISNERENLSAEALEAARICANKYMVKHAGKDNFHLRIRVYPFHVLRINKMLSCAGADRLQTGMRGSFGKPYGRAARVVFNQPILSIRTKESFRDAAVEALRRAKNKFPGHQKIQVSSKFGFTNMFSDEFNKLNESGRIILRGGSFSVIREKGSIDKFKRDLEYAANN.

Belongs to the universal ribosomal protein uL16 family. As to quaternary structure, component of the small ribosomal subunit. Mature ribosomes consist of a small (40S) and a large (60S) subunit. The 40S subunit contains about 33 different proteins and 1 molecule of RNA (18S). The 60S subunit contains about 49 different proteins and 3 molecules of RNA (25S, 5.8S and 5S).

In Encephalitozoon cuniculi (strain GB-M1) (Microsporidian parasite), this protein is Large ribosomal subunit protein uL16 (RPL10).